The sequence spans 226 residues: Membrane protein (226 aa).

The Virion surface segment spans residues 1–11 (MSNGSIPVDEV). The chain crosses the membrane as a helical span at residues 12 to 32 (IEHLRNWNFTWNIILTILLVV). Residues 33–41 (LQYGHYKYS) lie on the Intravirion side of the membrane. A helical membrane pass occupies residues 42 to 62 (VFLYGVKMAILWILWPLVLAL). Residues 63–75 (SLFDAWASFQVNW) are Virion surface-facing. A helical membrane pass occupies residues 76–96 (VFFAFSILMACITLMLWIMYF). Topologically, residues 97 to 226 (VNSIRLWRRT…TDSEKVLHLV (130 aa)) are intravirion. Positions 200–216 (RSKHGDYSAVSNPSAVL) are interaction with N protein.

Belongs to the alphacoronaviruses M protein family. Homomultimer. Interacts with envelope E protein in the budding compartment of the host cell, which is located between endoplasmic reticulum and the Golgi complex. Forms a complex with HE and S proteins. Interacts with nucleocapsid N protein. This interaction probably participates in RNA packaging into the virus.

The protein resides in the virion membrane. The protein localises to the host Golgi apparatus membrane. Functionally, component of the viral envelope that plays a central role in virus morphogenesis and assembly via its interactions with other viral proteins. This Sus scrofa (Pig) protein is Membrane protein.